Here is a 580-residue protein sequence, read N- to C-terminus: WD repeat-containing protein 46 (580 aa).

The disordered stretch occupies residues 34–108 (SWKEYKKMKQ…QQEKMKVTKD (75 aa)). 2 stretches are compositionally biased toward basic and acidic residues: residues 64–85 (TEGR…HDTG) and 98–108 (LQQEKMKVTKD). WD repeat units follow at residues 193 to 234 (AALD…YTYV), 235 to 272 (YDNL…NSFL), 274 to 312 (YVDV…HTNG), 315 to 354 (SLWS…GLDR), 357 to 396 (RIWD…NHVQ), and 399 to 436 (RGMH…IGHA).

In terms of assembly, part of the small subunit (SSU) processome.

The protein localises to the nucleus. Its subcellular location is the nucleolus. In terms of biological role, scaffold component of the nucleolar structure. Part of the small subunit (SSU) processome, first precursor of the small eukaryotic ribosomal subunit. Required for 18S rRNA processing. Plays a role in negative regulation of detoxification genes by inhibiting protein levels of transcription factor skn-1, leading to down-regulation of skn-1 target genes. This Caenorhabditis elegans protein is WD repeat-containing protein 46.